The chain runs to 411 residues: S-inosyl-L-homocysteine hydrolase (411 aa).

Substrate-binding residues include Asp-121 and Glu-146. 147-149 (TTT) is a binding site for NAD(+). The substrate site is built by Lys-176 and Asp-180. NAD(+) is bound by residues Asn-181, 210–215 (GYGWCG), Glu-233, Asn-268, 289–291 (SGH), and Asn-335.

The protein belongs to the adenosylhomocysteinase family. NAD(+) serves as cofactor.

It localises to the cytoplasm. The catalysed reaction is S-inosyl-L-homocysteine + H2O = L-homocysteine + inosine. It functions in the pathway amino-acid biosynthesis; S-adenosyl-L-methionine biosynthesis. Its function is as follows. Catalyzes the hydrolysis of S-inosyl-L-homocysteine (SIH) to L-homocysteine (Hcy) and inosine. Likely functions in a S-adenosyl-L-methionine (SAM) recycling pathway from S-adenosyl-L-homocysteine (SAH) produced from SAM-dependent methylation reactions. Can also catalyze the reverse reaction in vitro, i.e. the synthesis of SIH from Hcy and inosine. The chain is S-inosyl-L-homocysteine hydrolase from Methanosarcina acetivorans (strain ATCC 35395 / DSM 2834 / JCM 12185 / C2A).